A 585-amino-acid chain; its full sequence is Proline-rich protein 14 (585 aa).

Residue Met-1 is modified to N-acetylmethionine. Positions Met-1–Pro-135 are sufficient for heterochromatin association in interphase and chromatin association in anaphase. Disordered regions lie at residues Ala-23–Lys-46, Thr-73–Gln-150, and Ile-189–Leu-241. Residues Pro-85–Pro-378 form a required for the interaction with GRB2 and sufficient to promote the phosphorylation of AKT and cell proliferation region. Residues Arg-119–Arg-132 are compositionally biased toward basic residues. The segment at Gly-136 to Gly-365 is required for nuclear lamina association. A compositionally biased stretch (pro residues) spans Pro-193 to Gln-205. Ser-277 is modified (phosphoserine). 2 disordered regions span residues Glu-290–Arg-445 and Asp-525–Gly-557. Pro residues predominate over residues Leu-337–Arg-356. The span at Ser-393–Ser-409 shows a compositional bias: low complexity. Residues Arg-518 to Ser-535 are required for nuclear localization.

As to quaternary structure, interacts (via proline-rich region) with GRB2 (via SH3 domain 2). Interacts (via N-terminus) with CBX5.

The protein resides in the chromosome. It localises to the nucleus. It is found in the nucleus lamina. Its subcellular location is the nucleoplasm. Its function is as follows. Functions in tethering peripheral heterochromatin to the nuclear lamina during interphase, possibly through the interaction with heterochromatin protein CBX5/HP1 alpha. Might play a role in reattaching heterochromatin to the nuclear lamina at mitotic exit. Promotes myoblast differentiation during skeletal myogenesis, possibly by stimulating transcription factor MyoD activity via binding to CBX5/HP1 alpha. Involved in the positive regulation of the PI3K-Akt-mTOR signaling pathway and in promoting cell proliferation, possibly via binding to GRB2. This chain is Proline-rich protein 14 (PRR14), found in Homo sapiens (Human).